We begin with the raw amino-acid sequence, 1201 residues long: Putative disease resistance protein At4g19050 (1201 aa).

An ATP-binding site is contributed by 33-40 (GEAGIGKT). 14 LRR repeats span residues 469-491 (KLRV…SGLQ), 492-514 (GLHV…FFKN), 517-539 (QLQS…EKLS), 540-562 (MLRC…IVET), 680-701 (ELRI…IADV), 703-725 (NLNK…EKLT), 726-748 (HLEV…FGEM), 750-771 (YLHE…ISEL), 773-795 (NLKE…EKLT), 796-818 (NLEI…FENL), 820-841 (CLHK…ISEL), 843-865 (NLKE…EKLT), 866-888 (HLVI…FESM), and 890-911 (YLCE…PKQS). Over residues 1162–1180 (DEPRIGARITDEISEDQPH) the composition is skewed to basic and acidic residues. Residues 1162 to 1201 (DEPRIGARITDEISEDQPHKNTIGPETQTPTQPTKATDTV) are disordered. A compositionally biased stretch (polar residues) spans 1185 to 1201 (GPETQTPTQPTKATDTV).

Belongs to the disease resistance NB-LRR family.

Functionally, potential disease resistance protein. This is Putative disease resistance protein At4g19050 from Arabidopsis thaliana (Mouse-ear cress).